The sequence spans 165 residues: Endoribonuclease YbeY (165 aa).

Positions 130, 134, and 140 each coordinate Zn(2+).

This sequence belongs to the endoribonuclease YbeY family. Zn(2+) is required as a cofactor.

It is found in the cytoplasm. Single strand-specific metallo-endoribonuclease involved in late-stage 70S ribosome quality control and in maturation of the 3' terminus of the 16S rRNA. This chain is Endoribonuclease YbeY, found in Streptococcus thermophilus (strain CNRZ 1066).